A 195-amino-acid chain; its full sequence is MTPQLILASTSVFRQALLQKLGLAFGSCNPDIDESPMTNESAQDLVLRLAKAKAKAGATHFPHGLIIGSDQVAVIDGKIIGKPLNRENAIKQLSQASGKVITFYTGLALYDAKTGEVTAQVEPFTVHFRQLTAAQIVAYVDKEQPFYCAGSFKSEGLGIALFTRLEGRDPNTLIGLPLILLTEMLLNHGIDVLAD.

The active-site Proton acceptor is the aspartate 70.

This sequence belongs to the Maf family. YceF subfamily. It depends on a divalent metal cation as a cofactor.

The protein resides in the cytoplasm. The catalysed reaction is N(7)-methyl-GTP + H2O = N(7)-methyl-GMP + diphosphate + H(+). Functionally, nucleoside triphosphate pyrophosphatase that hydrolyzes 7-methyl-GTP (m(7)GTP). May have a dual role in cell division arrest and in preventing the incorporation of modified nucleotides into cellular nucleic acids. This chain is 7-methyl-GTP pyrophosphatase, found in Shewanella sp. (strain MR-4).